The following is a 287-amino-acid chain: POU domain class 2-associating factor 2 (287 aa).

The OCA domain occupies 10–32 (KRVYQGVRVKHTVKDLLAEKRSR). Disordered regions lie at residues 24–51 (DLLA…PPFI), 161–199 (TVPD…TQHR), and 247–279 (PKVG…MAWG). 2 stretches are compositionally biased toward polar residues: residues 33–49 (QTSN…SQPP) and 180–199 (LPPS…TQHR).

Belongs to the POU2AF family. In terms of assembly, interacts with POU2F3 (via the POU domain) in a DNA-dependent manner; this interaction recruits POU2AF2 to chromatin and increases POU2F3 transactivation activity. Expressed in tuft cells of the small intestine, trachea, thymus, and colon.

Its subcellular location is the cytoplasm. The protein resides in the cytosol. It localises to the nucleus. In terms of biological role, transcriptional coactivator of POU2F3. This complex drives the development of tuft cells, a rare chemosensory cells that coordinate immune and neural functions within mucosal epithelial tissues. In Mus musculus (Mouse), this protein is POU domain class 2-associating factor 2.